Reading from the N-terminus, the 183-residue chain is Peptide deformylase (183 aa).

Positions 110 and 153 each coordinate Fe cation. The active site involves Glu-154. Fe cation is bound at residue His-157.

Belongs to the polypeptide deformylase family. The cofactor is Fe(2+).

The enzyme catalyses N-terminal N-formyl-L-methionyl-[peptide] + H2O = N-terminal L-methionyl-[peptide] + formate. In terms of biological role, removes the formyl group from the N-terminal Met of newly synthesized proteins. Requires at least a dipeptide for an efficient rate of reaction. N-terminal L-methionine is a prerequisite for activity but the enzyme has broad specificity at other positions. This chain is Peptide deformylase, found in Listeria monocytogenes serotype 4a (strain HCC23).